Here is a 278-residue protein sequence, read N- to C-terminus: Large ribosomal subunit protein uL2 (278 aa).

Disordered stretches follow at residues 29–53 (PVKS…TSRG) and 221–278 (RGVA…KKKR). Over residues 269 to 278 (IRSRHAKKKR) the composition is skewed to basic residues.

This sequence belongs to the universal ribosomal protein uL2 family. Part of the 50S ribosomal subunit. Forms a bridge to the 30S subunit in the 70S ribosome.

Its function is as follows. One of the primary rRNA binding proteins. Required for association of the 30S and 50S subunits to form the 70S ribosome, for tRNA binding and peptide bond formation. It has been suggested to have peptidyltransferase activity; this is somewhat controversial. Makes several contacts with the 16S rRNA in the 70S ribosome. This Erythrobacter litoralis (strain HTCC2594) protein is Large ribosomal subunit protein uL2.